The primary structure comprises 192 residues: Nucleosome assembly protein 1-like 5 (192 aa).

A compositionally biased stretch (polar residues) spans 1-12 (MADSQNQGSAEP). Positions 1 to 76 (MADSQNQGSA…APKPRNDFIE (76 aa)) are disordered. Composition is skewed to low complexity over residues 15 to 28 (AAAA…AAAA) and 40 to 55 (GDSD…VVGQ). Residues 86–112 (VLALKKLQKRCDKIEAKFDKEFQALEK) adopt a coiled-coil conformation. Residues 136–192 (AWTLEGDEEDDDDDEYEDEEEGEEEDEEEEEPAAEAAGTAAAKDEGPHSAVPDDAKK) are disordered. Residues 140 to 168 (EGDEEDDDDDEYEDEEEGEEEDEEEEEPA) show a composition bias toward acidic residues. Residues 177-192 (AKDEGPHSAVPDDAKK) are compositionally biased toward basic and acidic residues.

Belongs to the nucleosome assembly protein (NAP) family.

The protein localises to the nucleus. The sequence is that of Nucleosome assembly protein 1-like 5 (NAP1L5) from Bos taurus (Bovine).